We begin with the raw amino-acid sequence, 709 residues long: Polyribonucleotide nucleotidyltransferase (709 aa).

The Mg(2+) site is built by D489 and D495. Residues P556–I615 form the KH domain. The S1 motif domain maps to G625–K693.

The protein belongs to the polyribonucleotide nucleotidyltransferase family. The cofactor is Mg(2+).

It is found in the cytoplasm. It carries out the reaction RNA(n+1) + phosphate = RNA(n) + a ribonucleoside 5'-diphosphate. Its function is as follows. Involved in mRNA degradation. Catalyzes the phosphorolysis of single-stranded polyribonucleotides processively in the 3'- to 5'-direction. This chain is Polyribonucleotide nucleotidyltransferase, found in Streptococcus agalactiae serotype V (strain ATCC BAA-611 / 2603 V/R).